The chain runs to 39 residues: uncharacterized protein (39 aa).

It belongs to the orthopoxvirus A30.5 protein family.

This is an uncharacterized protein from Bos taurus (Bovine).